The chain runs to 75 residues: MIRNFRRRKFCRFTLEKINNIDYKDIILLKNYITENGKIVPSRITGTRARYQRQLSRAVKRARYLSLLPYTDHHR.

This sequence belongs to the bacterial ribosomal protein bS18 family. Part of the 30S ribosomal subunit. Forms a tight heterodimer with protein bS6.

In terms of biological role, binds as a heterodimer with protein bS6 to the central domain of the 16S rRNA, where it helps stabilize the platform of the 30S subunit. The sequence is that of Small ribosomal subunit protein bS18 from Wigglesworthia glossinidia brevipalpis.